Here is a 120-residue protein sequence, read N- to C-terminus: Dense granule protein 5 (120 aa).

A signal peptide spans 1 to 25 (MASVKRVVVAVMIVNVLALIFVGVA). The segment at 27-59 (STRDVGSGGDDSEGARGREQQQVQQHEQNEDRS) is disordered. A helical transmembrane segment spans residues 76-93 (AVGLAAAVVAVVSLLRLL). Over residues 100-109 (AIQEESKESA) the composition is skewed to basic and acidic residues. The disordered stretch occupies residues 100–120 (AIQEESKESATAEEEEVAEEE). Over residues 110-120 (TAEEEEVAEEE) the composition is skewed to acidic residues.

The protein localises to the secreted. The protein resides in the parasitophorous vacuole lumen. It is found in the parasitophorous vacuole membrane. Its subcellular location is the cytoplasmic vesicle. It localises to the secretory vesicle. Its function is as follows. Plays a role in the function of the cyst and parasitophorous vacuole membranes and therefore in host-parasite interactions. The chain is Dense granule protein 5 (GRA5) from Toxoplasma gondii.